Here is a 498-residue protein sequence, read N- to C-terminus: MRINPTTSDPEVSIREKKNLGRIAQIIGPVLDVAFPPGKMPNIYNALVVKGRDTLGQEINVTCEVQQLLGNNRVRAVAMSATEGLKRGMDVVDMGKPLSVPVGGATLGRIFNVLGEPVDNLGPVDTRTTSPIHKSAPAFIQLDTKLSIFETGIKVVDLLAPYRRGGKIGLFGGAGVGKTVLIMELINNIAKAHGGVSVFGGVGERTREGNDLYMEMKESGVINEQNLAESKVALVYGQMNEPPGARMRVGLTALTMAEYFRDVNEQDVLLFIDNIFRFVQAGSEVSALLGRMPSAVGYQPTLSTEMGTLQERITSTKKGSITSIQAVYVPADDLTDPAPATTFAHLDATTVLSRGLAAKGIYPAVDPLDSTSTMLQPRIVGEEHYDTAQQVKQTLQRYKELQDIIAILGLDELSEEDRLTVARARKIERFLSQPFFVAEVFTGSPGKYVGLAETIRGFKLILSGEFDSLPEQAFYLVGNIDEATAKATNLEMESKLKK.

Thr-6 carries the post-translational modification Phosphothreonine. Ser-13 carries the phosphoserine modification. Residue 172–179 (GGAGVGKT) participates in ATP binding.

Belongs to the ATPase alpha/beta chains family. F-type ATPases have 2 components, CF(1) - the catalytic core - and CF(0) - the membrane proton channel. CF(1) has five subunits: alpha(3), beta(3), gamma(1), delta(1), epsilon(1). CF(0) has four main subunits: a(1), b(1), b'(1) and c(9-12).

It is found in the plastid. Its subcellular location is the chloroplast thylakoid membrane. The enzyme catalyses ATP + H2O + 4 H(+)(in) = ADP + phosphate + 5 H(+)(out). Functionally, produces ATP from ADP in the presence of a proton gradient across the membrane. The catalytic sites are hosted primarily by the beta subunits. This Capsella bursa-pastoris (Shepherd's purse) protein is ATP synthase subunit beta, chloroplastic.